We begin with the raw amino-acid sequence, 172 residues long: Myosin regulatory light polypeptide 9 (172 aa).

Over residues 1 to 16 the composition is skewed to basic residues; the sequence is MSSKRAKAKTTKKRPQ. Residues 1–20 are disordered; sequence MSSKRAKAKTTKKRPQRATS. Position 2 is an N-acetylserine (Ser-2). Position 19 is a phosphothreonine; by MLCK, CIT and ROCK2 (Thr-19). Residue Ser-20 is modified to Phosphoserine; by CDC42BP, CIT, MLCK, PAK1, ROCK1, ROCK2, DAPK1, DAPK2 and ZIPK/DAPK3. EF-hand domains are found at residues 29–64, 98–133, and 134–169; these read SQIQ…LGKN, DPED…MGDR, and FTDE…GAKD. Residues Asp-42, Asn-44, Asp-46, and Asp-53 each contribute to the Ca(2+) site.

As to quaternary structure, myosin is a hexamer of 2 heavy chains and 4 light chains: interacts with myosin heavy chain MYO19. Interacts with LUZP1; the interaction results in inhibition of phosphorylation of MYL9 by DAPK3. Post-translationally, phosphorylation increases the actin-activated myosin ATPase activity and thereby regulates the contractile activity. It is required to generate the driving force in the migration of the cells but not necessary for localization of myosin-2 at the leading edge. Phosphorylation is required for myotube formation. Phosphorylated by DAPK3; DAPK3-mediated phosphorylation is inhibited by LUZP1.

Its subcellular location is the cytoplasm. The protein resides in the cytoskeleton. It is found in the cell cortex. Its function is as follows. Myosin regulatory subunit that plays an important role in regulation of both smooth muscle and nonmuscle cell contractile activity via its phosphorylation. Implicated in cytokinesis, receptor capping, and cell locomotion. In myoblasts, regulates PIEZO1-dependent cortical actomyosin assembly involved in myotube formation. The chain is Myosin regulatory light polypeptide 9 (Myl9) from Mus musculus (Mouse).